Here is a 205-residue protein sequence, read N- to C-terminus: MAPIKIGIGGPVGSGKTELIERITRALDGEIEMAAITNDIYTLEDAKILARNSVLDEDRIIGVETGGCPHTAIREDTSMNDAAYEEIVKRHPNLDIVFVESGGDNLSATFSPELVDFSIYIIDVAQGEKIPRKAGQGMIKSDLFVINKTDLAPYVGADLSVMEADSKNFRGEKPFVMTNLKTDEGLDGVLRWIREDVLMSDLAES.

10-17 (GPVGSGKT) serves as a coordination point for GTP.

The protein belongs to the SIMIBI class G3E GTPase family. UreG subfamily. Homodimer. UreD, UreF and UreG form a complex that acts as a GTP-hydrolysis-dependent molecular chaperone, activating the urease apoprotein by helping to assemble the nickel containing metallocenter of UreC. The UreE protein probably delivers the nickel.

The protein resides in the cytoplasm. Facilitates the functional incorporation of the urease nickel metallocenter. This process requires GTP hydrolysis, probably effectuated by UreG. The chain is Urease accessory protein UreG from Corynebacterium urealyticum (strain ATCC 43042 / DSM 7109).